Reading from the N-terminus, the 200-residue chain is GTP cyclohydrolase-2 (200 aa).

Residue 50 to 54 (RVHSE) coordinates GTP. Positions 55, 66, and 68 each coordinate Zn(2+). GTP-binding positions include Gln71, 93-95 (EGR), and Thr115. The Proton acceptor role is filled by Asp127. The active-site Nucleophile is the Arg129. GTP-binding residues include Thr150 and Lys155.

Belongs to the GTP cyclohydrolase II family. Zn(2+) serves as cofactor.

The catalysed reaction is GTP + 4 H2O = 2,5-diamino-6-hydroxy-4-(5-phosphoribosylamino)-pyrimidine + formate + 2 phosphate + 3 H(+). Its pathway is cofactor biosynthesis; riboflavin biosynthesis; 5-amino-6-(D-ribitylamino)uracil from GTP: step 1/4. In terms of biological role, catalyzes the conversion of GTP to 2,5-diamino-6-ribosylamino-4(3H)-pyrimidinone 5'-phosphate (DARP), formate and pyrophosphate. This chain is GTP cyclohydrolase-2, found in Acinetobacter baumannii (strain SDF).